The chain runs to 126 residues: Aspartate 1-decarboxylase (126 aa).

Residue Ser25 is the Schiff-base intermediate with substrate; via pyruvic acid of the active site. A Pyruvic acid (Ser) modification is found at Ser25. Thr57 is a substrate binding site. Catalysis depends on Tyr58, which acts as the Proton donor. 73–75 (GGA) provides a ligand contact to substrate.

This sequence belongs to the PanD family. Heterooctamer of four alpha and four beta subunits. The cofactor is pyruvate. Post-translationally, is synthesized initially as an inactive proenzyme, which is activated by self-cleavage at a specific serine bond to produce a beta-subunit with a hydroxyl group at its C-terminus and an alpha-subunit with a pyruvoyl group at its N-terminus.

Its subcellular location is the cytoplasm. The enzyme catalyses L-aspartate + H(+) = beta-alanine + CO2. The protein operates within cofactor biosynthesis; (R)-pantothenate biosynthesis; beta-alanine from L-aspartate: step 1/1. In terms of biological role, catalyzes the pyruvoyl-dependent decarboxylation of aspartate to produce beta-alanine. This chain is Aspartate 1-decarboxylase, found in Xanthomonas campestris pv. campestris (strain ATCC 33913 / DSM 3586 / NCPPB 528 / LMG 568 / P 25).